Reading from the N-terminus, the 338-residue chain is Glycerol-1-phosphate dehydrogenase [NAD(P)+] (338 aa).

NAD(+) is bound by residues 81–85 (GRPLD) and 103–106 (TSAS). Asp-108 is a substrate binding site. Ser-112 is a binding site for NAD(+). Asp-157 is a binding site for substrate. Asp-157 and His-238 together coordinate Zn(2+). Residue His-242 coordinates substrate. His-256 lines the Zn(2+) pocket.

Belongs to the glycerol-1-phosphate dehydrogenase family. As to quaternary structure, homodimer. Zn(2+) is required as a cofactor.

The protein resides in the cytoplasm. It catalyses the reaction sn-glycerol 1-phosphate + NAD(+) = dihydroxyacetone phosphate + NADH + H(+). The catalysed reaction is sn-glycerol 1-phosphate + NADP(+) = dihydroxyacetone phosphate + NADPH + H(+). Its pathway is membrane lipid metabolism; glycerophospholipid metabolism. Functionally, catalyzes the NAD(P)H-dependent reduction of dihydroxyacetonephosphate (DHAP or glycerone phosphate) to glycerol 1-phosphate (G1P). The G1P thus generated is used as the glycerophosphate backbone of phospholipids in the cellular membranes of Archaea. The chain is Glycerol-1-phosphate dehydrogenase [NAD(P)+] from Pyrobaculum calidifontis (strain DSM 21063 / JCM 11548 / VA1).